The chain runs to 395 residues: Oxalate oxidoreductase subunit alpha (395 aa).

As to quaternary structure, dimer of heterotrimer of one alpha, one beta and one delta subunit.

It carries out the reaction oxidized 2[4Fe-4S]-[ferredoxin] + oxalate = reduced 2[4Fe-4S]-[ferredoxin] + 2 CO2. In terms of biological role, catalyzes the anaerobic oxidation of oxalate using a broad range of electron acceptors, including ferredoxin and the nickel-dependent carbon monoxide dehydrogenase. Does not require coenzyme A as cosubstrate. Enables anaerobic growth on oxalate which is used as energy source by the bacteria. This chain is Oxalate oxidoreductase subunit alpha, found in Moorella thermoacetica (strain ATCC 39073 / JCM 9320).